The primary structure comprises 363 residues: Pyrimidine monooxygenase RutA (363 aa).

FMN contacts are provided by residues 49–50 (IK), asparagine 115, glutamate 124, 140–141 (RY), and serine 190.

The protein belongs to the NtaA/SnaA/DszA monooxygenase family. RutA subfamily.

The catalysed reaction is uracil + FMNH2 + NADH + O2 = (Z)-3-ureidoacrylate + FMN + NAD(+) + H2O + H(+). It carries out the reaction thymine + FMNH2 + NADH + O2 = (Z)-2-methylureidoacrylate + FMN + NAD(+) + H2O + H(+). Catalyzes the pyrimidine ring opening between N-3 and C-4 by an unusual flavin hydroperoxide-catalyzed mechanism, adding oxygen atoms in the process to yield ureidoacrylate peracid, that immediately reacts with FMN forming ureidoacrylate and FMN-N(5)-oxide. The FMN-N(5)-oxide reacts spontaneously with NADH to produce FMN. Requires the flavin reductase RutF to regenerate FMN in vivo. The chain is Pyrimidine monooxygenase RutA from Escherichia coli O103:H2 (strain 12009 / EHEC).